A 366-amino-acid polypeptide reads, in one-letter code: Cobalt-precorrin-5B C(1)-methyltransferase (366 aa).

Belongs to the CbiD family.

It catalyses the reaction Co-precorrin-5B + S-adenosyl-L-methionine = Co-precorrin-6A + S-adenosyl-L-homocysteine. The protein operates within cofactor biosynthesis; adenosylcobalamin biosynthesis; cob(II)yrinate a,c-diamide from sirohydrochlorin (anaerobic route): step 6/10. Catalyzes the methylation of C-1 in cobalt-precorrin-5B to form cobalt-precorrin-6A. This is Cobalt-precorrin-5B C(1)-methyltransferase from Thermoanaerobacter sp. (strain X514).